Reading from the N-terminus, the 426-residue chain is Serine hydroxymethyltransferase (426 aa).

(6S)-5,6,7,8-tetrahydrofolate contacts are provided by residues Leu-115 and 119–121; that span reads GHI. Lys-225 carries the post-translational modification N6-(pyridoxal phosphate)lysine.

Belongs to the SHMT family. As to quaternary structure, homodimer. The cofactor is pyridoxal 5'-phosphate.

It localises to the cytoplasm. It participates in amino-acid biosynthesis; glycine biosynthesis; glycine from L-serine: step 1/1. Functionally, catalyzes the reversible interconversion of serine and glycine with a modified folate serving as the one-carbon carrier. Also exhibits a pteridine-independent aldolase activity toward beta-hydroxyamino acids, producing glycine and aldehydes, via a retro-aldol mechanism. The polypeptide is Serine hydroxymethyltransferase (Thermoplasma acidophilum (strain ATCC 25905 / DSM 1728 / JCM 9062 / NBRC 15155 / AMRC-C165)).